The chain runs to 88 residues: UPF0298 protein BC_3932 (88 aa).

It belongs to the UPF0298 family.

Its subcellular location is the cytoplasm. The chain is UPF0298 protein BC_3932 from Bacillus cereus (strain ATCC 14579 / DSM 31 / CCUG 7414 / JCM 2152 / NBRC 15305 / NCIMB 9373 / NCTC 2599 / NRRL B-3711).